We begin with the raw amino-acid sequence, 612 residues long: Calcium-dependent protein kinase 27 (612 aa).

G2 carries N-myristoyl glycine lipidation. The tract at residues 23–132 is disordered; sequence PRHAAPSSPS…AHIKRISSAG (110 aa). Over residues 28–50 the composition is skewed to low complexity; sequence PSSPSQPTTTSRSIPVVLPSAPS. Over residues 51 to 100 the composition is skewed to pro residues; it reads SKPPPPTQTAPPVPVVISEPPPPQPQPEPQPAAPSQPPPPQEQPSPPPPA. A compositionally biased stretch (basic residues) spans 117–127; the sequence is SRAKKPAHIKR. In terms of domain architecture, Protein kinase spans 150-408; the sequence is YSLGRKLGQG…AHEVLCHPWL (259 aa). ATP is bound by residues 156-164 and K179; that span reads LGQGQFGTT. D274 (proton acceptor) is an active-site residue. The segment at 414–444 is autoinhibitory domain; the sequence is APDKPLDSAVLSRLRQFSAMNKLKKMALRVI. EF-hand domains follow at residues 451-486, 487-522, 523-558, and 561-592; these read EEIAGLKEMFKMMDTDNSGQINYEELKAGLERVGAN, MKESEIYQLMQAADIDNSGTIDYGEFIAATLHLNKV, EREDHLYAAFQYFDKDGSGYITSDELQQACDEFGIE, and RLEDMIGEVDQDNDGRIDYNEFVAMMQKTTTG. Ca(2+) contacts are provided by D464, D466, S468, Q470, E475, D500, D502, S504, T506, E511, D536, D538, S540, Y542, E547, D570, D572, D574, R576, and E581.

The protein belongs to the protein kinase superfamily. Ser/Thr protein kinase family. CDPK subfamily.

It is found in the membrane. It catalyses the reaction L-seryl-[protein] + ATP = O-phospho-L-seryl-[protein] + ADP + H(+). The enzyme catalyses L-threonyl-[protein] + ATP = O-phospho-L-threonyl-[protein] + ADP + H(+). Activated by calcium. Autophosphorylation may play an important role in the regulation of the kinase activity. In terms of biological role, may play a role in signal transduction pathways that involve calcium as a second messenger. This is Calcium-dependent protein kinase 27 from Oryza sativa subsp. japonica (Rice).